We begin with the raw amino-acid sequence, 318 residues long: Ribose-phosphate pyrophosphokinase 1 (318 aa).

ATP contacts are provided by residues 43-45 and 102-103; these read DGE and RQ. Residues His-136 and Asp-176 each coordinate Mg(2+). Residue Lys-199 is part of the active site. D-ribose 5-phosphate-binding positions include Arg-201, Asp-225, and 229–233; that span reads DTAGT.

It belongs to the ribose-phosphate pyrophosphokinase family. Class I subfamily. In terms of assembly, homohexamer. Mg(2+) is required as a cofactor.

It is found in the cytoplasm. The enzyme catalyses D-ribose 5-phosphate + ATP = 5-phospho-alpha-D-ribose 1-diphosphate + AMP + H(+). It functions in the pathway metabolic intermediate biosynthesis; 5-phospho-alpha-D-ribose 1-diphosphate biosynthesis; 5-phospho-alpha-D-ribose 1-diphosphate from D-ribose 5-phosphate (route I): step 1/1. Functionally, involved in the biosynthesis of the central metabolite phospho-alpha-D-ribosyl-1-pyrophosphate (PRPP) via the transfer of pyrophosphoryl group from ATP to 1-hydroxyl of ribose-5-phosphate (Rib-5-P). In Listeria monocytogenes serotype 4b (strain F2365), this protein is Ribose-phosphate pyrophosphokinase 1.